The primary structure comprises 305 residues: Protoheme IX farnesyltransferase (305 aa).

The next 9 helical transmembrane spans lie at 31 to 51 (VMSLVIFTGFVGMWLAPYSVH), 52 to 72 (PFIAGIAVVCIALGAGSAGAI), 96 to 118 (VIESDEALSFGLITGFFAVFFMA), 123 to 145 (LLASFLLLFTIFYYICIYTIWLK), 151 to 171 (NIVIGGVSGALPPVIGYAAVS), 179 to 199 (IILFLIIFIWTPPHSWALALF), 225 to 245 (ILIYSILLFIVSLMPFFIGMN), 247 to 267 (FIYLIISGILGVVFLYYAGSL), and 281 to 301 (FAYSIFYLFFIFLLLYSTNTI).

The protein belongs to the UbiA prenyltransferase family. Protoheme IX farnesyltransferase subfamily.

It localises to the cell inner membrane. It catalyses the reaction heme b + (2E,6E)-farnesyl diphosphate + H2O = Fe(II)-heme o + diphosphate. The protein operates within porphyrin-containing compound metabolism; heme O biosynthesis; heme O from protoheme: step 1/1. Its function is as follows. Converts heme B (protoheme IX) to heme O by substitution of the vinyl group on carbon 2 of heme B porphyrin ring with a hydroxyethyl farnesyl side group. The sequence is that of Protoheme IX farnesyltransferase from Rickettsia rickettsii (strain Iowa).